The chain runs to 136 residues: uncharacterized protein (136 aa).

The interval 46-136 (SAGRHLGGPG…LDGLEDAEKR (91 aa)) is disordered. A compositionally biased stretch (gly residues) spans 99–108 (GPGDAGGAGG). Over residues 123–136 (IAELLDGLEDAEKR) the composition is skewed to acidic residues.

This is an uncharacterized protein from Homo sapiens (Human).